The chain runs to 207 residues: Large ribosomal subunit protein uL3c (207 aa).

A disordered region spans residues 129 to 148 (TRGPMTHGSKNHRAPGSIGM).

This sequence belongs to the universal ribosomal protein uL3 family. In terms of assembly, part of the 50S ribosomal subunit.

Its subcellular location is the plastid. The protein resides in the chloroplast. Its function is as follows. One of the primary rRNA binding proteins, it binds directly near the 3'-end of the 23S rRNA, where it nucleates assembly of the 50S subunit. The sequence is that of Large ribosomal subunit protein uL3c (rpl3) from Phaeodactylum tricornutum (strain CCAP 1055/1).